A 75-amino-acid polypeptide reads, in one-letter code: Conotoxin Vn5.5 (75 aa).

The signal sequence occupies residues 1 to 19 (MLCLPVFIILLLLASPAAP). The propeptide occupies 20 to 59 (NPLEKRIQSDLIRAALEDADMKTDEREIVNIIDSISDVAK). Residue Gln60 is modified to Pyrrolidone carboxylic acid.

Belongs to the conotoxin T superfamily. Contains 2 disulfide bonds that can be either 'C1-C3, C2-C4' or 'C1-C4, C2-C3', since these disulfide connectivities have been observed for conotoxins with cysteine framework V (for examples, see AC P0DQQ7 and AC P81755). Expressed by the venom duct.

The protein localises to the secreted. The sequence is that of Conotoxin Vn5.5 from Conus ventricosus (Mediterranean cone).